Reading from the N-terminus, the 283-residue chain is Diaminopimelate epimerase (283 aa).

Residues Asn-13, Gln-46, and Asn-66 each contribute to the substrate site. Residue Cys-75 is the Proton donor of the active site. Residues 76–77, Asn-166, Asn-199, and 217–218 contribute to the substrate site; these read GN and ER. The active-site Proton acceptor is Cys-226. Position 227-228 (227-228) interacts with substrate; it reads GT.

Belongs to the diaminopimelate epimerase family. In terms of assembly, homodimer.

It is found in the cytoplasm. The enzyme catalyses (2S,6S)-2,6-diaminopimelate = meso-2,6-diaminopimelate. Its pathway is amino-acid biosynthesis; L-lysine biosynthesis via DAP pathway; DL-2,6-diaminopimelate from LL-2,6-diaminopimelate: step 1/1. In terms of biological role, catalyzes the stereoinversion of LL-2,6-diaminopimelate (L,L-DAP) to meso-diaminopimelate (meso-DAP), a precursor of L-lysine and an essential component of the bacterial peptidoglycan. The polypeptide is Diaminopimelate epimerase (Herminiimonas arsenicoxydans).